The following is a 413-amino-acid chain: Serine/threonine-protein phosphatase 2A 55 kDa regulatory subunit B beta isoform (413 aa).

WD repeat units lie at residues 1 to 31, 57 to 98, 141 to 179, and 190 to 230; these read EFNH…KNQV, EIEE…KRPE, AHTY…QSFN, and ELTE…LCDR. The residue at position 245 (Ser245) is a Phosphoserine. WD repeat units lie at residues 249 to 287, 304 to 345, and 380 to 412; these read EIIS…RPIE, ENDC…DVTL, and DFSK…QDKV. Tyr265 carries the post-translational modification Phosphotyrosine. Thr268 carries the phosphothreonine modification.

This sequence belongs to the phosphatase 2A regulatory subunit B family. In terms of assembly, PP2A consists of a common heterodimeric core enzyme, composed of a 36 kDa catalytic subunit (subunit C) and a 65 kDa constant regulatory subunit (PR65 or subunit A), that associates with a variety of regulatory subunits. Proteins that associate with the core dimer include three families of regulatory subunits B (the R2/B/PR55/B55, R3/B''/PR72/PR130/PR59 and R5/B'/B56 families), the 48 kDa variable regulatory subunit, viral proteins, and cell signaling molecules. Interacts with TOMM22. Interacts with IER5 (via N- and C-terminal regions). As to expression, brain.

The protein resides in the cytoplasm. The protein localises to the cytoskeleton. It is found in the membrane. The B regulatory subunit might modulate substrate selectivity and catalytic activity, and might also direct the localization of the catalytic enzyme to a particular subcellular compartment. The sequence is that of Serine/threonine-protein phosphatase 2A 55 kDa regulatory subunit B beta isoform (PPP2R2B) from Oryctolagus cuniculus (Rabbit).